Consider the following 358-residue polypeptide: Alanine racemase (358 aa).

The Proton acceptor; specific for D-alanine role is filled by Lys-35. N6-(pyridoxal phosphate)lysine is present on Lys-35. Substrate is bound at residue Arg-130. Residue Tyr-255 is the Proton acceptor; specific for L-alanine of the active site. Met-303 provides a ligand contact to substrate.

It belongs to the alanine racemase family. It depends on pyridoxal 5'-phosphate as a cofactor.

It carries out the reaction L-alanine = D-alanine. It participates in amino-acid biosynthesis; D-alanine biosynthesis; D-alanine from L-alanine: step 1/1. Catalyzes the interconversion of L-alanine and D-alanine. May also act on other amino acids. This chain is Alanine racemase (alr), found in Shewanella oneidensis (strain ATCC 700550 / JCM 31522 / CIP 106686 / LMG 19005 / NCIMB 14063 / MR-1).